The following is a 438-amino-acid chain: Flotillin-2 (438 aa).

Belongs to the band 7/mec-2 family. Flotillin subfamily. As to quaternary structure, heterooligomeric complex of flotillins 1 and 2.

It localises to the membrane. Its function is as follows. May play a role in axon growth and regeneration. May be involved in epidermal cell adhesion and epidermal structure and function. The sequence is that of Flotillin-2 from Drosophila melanogaster (Fruit fly).